The primary structure comprises 1649 residues: MASSLQKQLKNIQSNNVLKINKIRRAPSLLYDPKVAADMDLEEIYVTAVSGFHELAVHEPRLLYFEKTLLGEQSVQVDRVLLNRTENEKIDLECVQILRLLAPFFTEKNALKVLEWLIRRFSIHEYVSDEFILSFLPFHDHPFFARILGCSKPKSRPLLFLENAIKMPVTLSRADIVHALSRDKEFFAMFAQFVQNTAESHNMYPELARFWAGTMMEVLVAWHSSNEDPNVLLDRFFLRVSYAVSYVSSIDFQIAGFMLLSSIAASLPLSPSIIPPLVSAITDRLSFDNIKPALICVGHLLQFCSSFEFDHEQLEKLESFGASSLLIELSQEHRLDEFFVSYWVSLIKSRKQKDKKRLISLLDTSISQIRVTHEQAKFLLSVIPVNQDFKALQSYRRILDSVIQPERKEGKLDNLINTLQDKKKSSTFSKKDREVLLKKISEIDSQTSFEQCLAYADSAADLDSSVFISLLSKFGDKIPFLLFCIANGSERIIILSLIELRKTIEENKDVDYQIILPVVLYSLQSKDTEVRSRALNLILTFLELRNENLEFSIIYGMDDNDNKNLRWLSPVETKYYCSDLLLDRSSEIGLDGTYLFSYIPERLFTEKKPKNASKEIAVTSFLSSHAACSKLSNVRVLLLEILTRVHGKVEDAKMQILLPRLEQLSEFNSEKFKTVSKREVEALVNCFNHTSFTSLLSFLSSNIVLSQAICRRIVEIQSHLKDPQRLEFVKAVISQDEQPHYYVDVLDSIKIPDTVFKKLIGSVRLVKEKNPAIAKRKRIDSHIFDGDVQRLTRILELLETKNAASYPKLASPLFEVLNSVIALKEDIVSSNYLLQLLLGLLYEMIGASPITELSPSIRIDTLVGCIRSTNNPQIQNKALLLVSALANAAPEAVLHGVMPIFTFMGSTVLSRDDAFSIHVIEQTVKTVISALIRLGKDFDSSLLVSCFVNAFPHIPQHRRLRLYRLVLQTIGSNRFLSVVLIQFAEKMLLAKSTNVVAIHDFCLTLVQSFSVADRIGSINQCSRFCLKSLEEQSNSDSNGKAVSLIKLDELPMDVDLATLGSLRVKVLELISLVSKAKNFAFDLAKIMENSVDSFVEIQAGLFESIKLLITLSQQSSNEMELGHVYVALRSVIHLLPNELFCTVLGKLLHDERALLRRKALSIVQQRVQQGSKVSALTALIPDVTYNISNYSDEETTQLAMDCLAVMAKRFSASPELFISPIEVVSGPYGLKNSARDVQVSAIVCITVLTNTLAARILPYLADIVNYSLSILDDARKDPEGDLLELACFSMMIDFFKVLPEFSSSYVEPTIKCALASDRAFEHDAIGELLFETIANFIPTRLLMKSIFAAWPECARLGSTAALRLLELIELALQNSSRSAIGTVYKSIFKFFLDSFDSRRSLLFAEDVDNVETQAVNVFLKFVMKLSDTTFRPLFLHLHSWALEDLYETDPSGIVSRQTFFYNFLTIFLDTLKSIVTNYYAYVLDDTIELLSSKDTNSEVRHLVNSSLVSAFENDTEEFWMVPARFGKISPVLIEQIQYAPLLDDKVLVKAIVELASVASSSDNFRSMNTQLLQYLRSSNINARLLAIQIQTQLYGRLGENWISTLPQSVPFIAELMEDDDDQVETATAELVRIIDDRLGENESLQDYLT.

One copy of the HEAT repeat lies at 1608 to 1646 (SVPFIAELMEDDDDQVETATAELVRIIDDRLGENESLQD).

This sequence belongs to the HEATR1/UTP10 family. As to quaternary structure, component of the ribosomal small subunit (SSU) processome.

The protein resides in the nucleus. The protein localises to the nucleolus. Its function is as follows. Involved in nucleolar processing of pre-18S ribosomal RNA. Required for optimal pre-ribosomal RNA transcription by RNA polymerase I together with a subset of U3 proteins required for transcription (t-UTPs). Involved in ribosome biosynthesis. The protein is U3 small nucleolar RNA-associated protein 10 (utp10) of Schizosaccharomyces pombe (strain 972 / ATCC 24843) (Fission yeast).